The primary structure comprises 636 residues: Nucleolar protein 9 (636 aa).

The segment at 1 to 59 (MGQGPRSPHKVGRRFPAGGKRGRGAKGSGRPLPGRKRQPWPPPDGRSEPAPDSHPHLSP) is disordered. The residue at position 7 (Ser7) is a Phosphoserine. Residues 45-57 (GRSEPAPDSHPHL) are compositionally biased toward basic and acidic residues. Pumilio repeat units follow at residues 92–123 (EVET…KPLC) and 189–223 (EVCD…ESER). Positions 222 to 241 (ERARPRGSQSSEAQKTPAQE) are disordered. Polar residues predominate over residues 228 to 238 (GSQSSEAQKTP). Pumilio repeat units follow at residues 313–348 (SVDG…QSLF), 351–386 (HLQG…SPVF), 509–544 (LTGP…RRRV), and 547–581 (NLKG…KEIA).

Belongs to the NOP9 family.

The chain is Nucleolar protein 9 (NOP9) from Homo sapiens (Human).